A 656-amino-acid chain; its full sequence is UV-damage endonuclease (656 aa).

Disordered regions lie at residues 1-82 (MPSR…GKEQ), 119-146 (PSVVSRFPTAPYHHKSTNAEEREAKEPV), 175-194 (IIEPEDAQDAAERGAARPPA), 241-264 (PLQFEDEPEHHLKNKPDKSKEPQD), 492-515 (EPCDGAVTPRDRRKHRPRVMTLPP), 550-620 (DMVP…GPYN), and 636-656 (KREVKKGKVPEEVEDEGEFDG). Low complexity predominate over residues 13–32 (TPQSESSTFSSTLDSSAPSP). Basic and acidic residues-rich tracts occupy residues 48 to 82 (SEKDRDHEKRSGEELAGRMMGKDANGHCLREGKEQ) and 135 to 146 (TNAEEREAKEPV). Over residues 550 to 561 (DMVPYDRDDENR) the composition is skewed to basic and acidic residues. Positions 568–579 (APKKKKGGKRKR) are enriched in basic residues. The span at 583-595 (EEAAEPEEVDTAA) shows a compositional bias: acidic residues. The span at 596 to 614 (DDVKDAPEGPKEVPEEERA) shows a compositional bias: basic and acidic residues. The segment covering 647–656 (EVEDEGEFDG) has biased composition (acidic residues).

This sequence belongs to the uve1/UvsE family. It depends on Mg(2+) as a cofactor.

Endonuclease for the repair of UV-irradiated DNA. Involved in the excision of cyclobutane pyrimidine dimers (CPD) and 6-4 pyrimidine pyrimidones (6-4PP) which forms the UV damage repair (UVDR) pathway. This Neurospora crassa (strain ATCC 24698 / 74-OR23-1A / CBS 708.71 / DSM 1257 / FGSC 987) protein is UV-damage endonuclease (mus-18).